Consider the following 160-residue polypeptide: Endoribonuclease YbeY (160 aa).

His123, His127, and His133 together coordinate Zn(2+).

This sequence belongs to the endoribonuclease YbeY family. Zn(2+) is required as a cofactor.

It localises to the cytoplasm. Functionally, single strand-specific metallo-endoribonuclease involved in late-stage 70S ribosome quality control and in maturation of the 3' terminus of the 16S rRNA. The protein is Endoribonuclease YbeY of Shouchella clausii (strain KSM-K16) (Alkalihalobacillus clausii).